Here is a 197-residue protein sequence, read N- to C-terminus: Protein RESISTANCE TO PHYTOPHTHORA 1, chloroplastic (197 aa).

The N-terminal 52 residues, Met-1–Ser-52, are a transit peptide targeting the chloroplast. The segment at Ser-35–Leu-56 is disordered. Helical transmembrane passes span Phe-93–Phe-113, Leu-120–Arg-140, Leu-150–Ser-170, and Leu-173–Leu-193.

Its subcellular location is the plastid. It is found in the chloroplast. It localises to the membrane. In terms of biological role, plays a positive role in the immune response to the oomycetes P.brassicae, including induced oxidative burst (e.g. H(2)O(2)) and enhanced expression of defense-related genes. The chain is Protein RESISTANCE TO PHYTOPHTHORA 1, chloroplastic from Arabidopsis thaliana (Mouse-ear cress).